A 369-amino-acid chain; its full sequence is tRNA pseudouridine synthase D (369 aa).

Asp-80 serves as the catalytic Nucleophile. Residues 156 to 318 (GIPNWFGEQR…LKQERRALRL (163 aa)) form the TRUD domain.

It belongs to the pseudouridine synthase TruD family.

The catalysed reaction is uridine(13) in tRNA = pseudouridine(13) in tRNA. In terms of biological role, responsible for synthesis of pseudouridine from uracil-13 in transfer RNAs. This Xanthomonas euvesicatoria pv. vesicatoria (strain 85-10) (Xanthomonas campestris pv. vesicatoria) protein is tRNA pseudouridine synthase D.